A 539-amino-acid chain; its full sequence is Dihydrolipoyllysine-residue acetyltransferase component 3 of pyruvate dehydrogenase complex, mitochondrial (539 aa).

A mitochondrion-targeting transit peptide spans 1–102 (MAYASRIINH…SCLMQSARGF (102 aa)). Residues 111-187 (HQEIGMPSLS…QVGEVIAITV (77 aa)) enclose the Lipoyl-binding domain. Residue K152 is modified to N6-lipoyllysine. Positions 195–247 (KFKDYTPSSTADAAPTKAEPTPAPPKEEKVKQPSSPPEPKASKPSTPPTGDRV) are disordered. Residues 204–214 (TADAAPTKAEP) are compositionally biased toward low complexity. The Peripheral subunit-binding (PSBD) domain occupies 248-285 (FASPLARKLAEDNNVPLSDIEGTGPEGRIVKADIDEYL). Active-site residues include H512 and D516.

This sequence belongs to the 2-oxoacid dehydrogenase family. (R)-lipoate serves as cofactor.

Its subcellular location is the mitochondrion matrix. The enzyme catalyses N(6)-[(R)-dihydrolipoyl]-L-lysyl-[protein] + acetyl-CoA = N(6)-[(R)-S(8)-acetyldihydrolipoyl]-L-lysyl-[protein] + CoA. Functionally, the pyruvate dehydrogenase complex catalyzes the overall conversion of pyruvate to acetyl-CoA and CO(2). It contains multiple copies of three enzymatic components: pyruvate dehydrogenase (E1), dihydrolipoamide acetyltransferase (E2) and lipoamide dehydrogenase (E3). The protein is Dihydrolipoyllysine-residue acetyltransferase component 3 of pyruvate dehydrogenase complex, mitochondrial of Arabidopsis thaliana (Mouse-ear cress).